Reading from the N-terminus, the 162-residue chain is Nucleotide-binding protein AnaeK_0101 (162 aa).

Belongs to the YajQ family.

Its function is as follows. Nucleotide-binding protein. The protein is Nucleotide-binding protein AnaeK_0101 of Anaeromyxobacter sp. (strain K).